The sequence spans 212 residues: 3-demethoxyubiquinol 3-hydroxylase (212 aa).

A disordered region spans residues Ser-21–Leu-42. The Fe cation site is built by Glu-61, Glu-91, His-94, Glu-143, Glu-175, and His-178.

It belongs to the COQ7 family. The cofactor is Fe cation.

The protein localises to the cell membrane. The catalysed reaction is a 5-methoxy-2-methyl-3-(all-trans-polyprenyl)benzene-1,4-diol + AH2 + O2 = a 3-demethylubiquinol + A + H2O. Its pathway is cofactor biosynthesis; ubiquinone biosynthesis. Functionally, catalyzes the hydroxylation of 2-nonaprenyl-3-methyl-6-methoxy-1,4-benzoquinol during ubiquinone biosynthesis. This is 3-demethoxyubiquinol 3-hydroxylase from Paraburkholderia xenovorans (strain LB400).